A 644-amino-acid polypeptide reads, in one-letter code: Acetolactate synthase 1, chloroplastic (644 aa).

Residues 1 to 43 constitute a chloroplast transit peptide; it reads MATTAAAAAAALSAAATAKTGRKNHQRHHVLPARGRVGAAAVR. The segment at 47–67 is disordered; that stretch reads VSPVTPPSPAPPATPLRPWGP. The span at 50–61 shows a compositional bias: pro residues; it reads VTPPSPAPPATP. E118 lines the thiamine diphosphate pocket. Cysteines 138 and 284 form a disulfide. FAD-binding positions include R220, 326 to 347, and 369 to 388; these read HGTV…FGVR and DIDP…ICAD. A thiamine pyrophosphate binding region spans residues 461–541; it reads QHQMWAAQYY…VKVMVLNNQH (81 aa). Mg(2+) is bound by residues D512 and N539.

This sequence belongs to the TPP enzyme family. Mg(2+) is required as a cofactor. It depends on thiamine diphosphate as a cofactor.

It localises to the plastid. Its subcellular location is the chloroplast. It carries out the reaction 2 pyruvate + H(+) = (2S)-2-acetolactate + CO2. It functions in the pathway amino-acid biosynthesis; L-isoleucine biosynthesis; L-isoleucine from 2-oxobutanoate: step 1/4. Its pathway is amino-acid biosynthesis; L-valine biosynthesis; L-valine from pyruvate: step 1/4. This chain is Acetolactate synthase 1, chloroplastic (ALS1), found in Oryza sativa subsp. japonica (Rice).